The following is a 148-amino-acid chain: Deoxyuridine 5'-triphosphate nucleotidohydrolase (148 aa).

Substrate is bound by residues 67–69 (RSG), asparagine 80, 84–86 (LID), and methionine 94.

It belongs to the dUTPase family. Mg(2+) is required as a cofactor.

The enzyme catalyses dUTP + H2O = dUMP + diphosphate + H(+). It participates in pyrimidine metabolism; dUMP biosynthesis; dUMP from dCTP (dUTP route): step 2/2. In terms of biological role, this enzyme is involved in nucleotide metabolism: it produces dUMP, the immediate precursor of thymidine nucleotides and it decreases the intracellular concentration of dUTP so that uracil cannot be incorporated into DNA. This Burkholderia cenocepacia (strain HI2424) protein is Deoxyuridine 5'-triphosphate nucleotidohydrolase.